Here is a 501-residue protein sequence, read N- to C-terminus: Glycerol kinase (501 aa).

Threonine 16 contacts ADP. Threonine 16, threonine 17, and serine 18 together coordinate ATP. Threonine 16 contributes to the sn-glycerol 3-phosphate binding site. Residue arginine 20 participates in ADP binding. Sn-glycerol 3-phosphate-binding residues include arginine 84, glutamate 85, tyrosine 135, and aspartate 242. Residues arginine 84, glutamate 85, tyrosine 135, aspartate 242, and glutamine 243 each contribute to the glycerol site. ADP contacts are provided by threonine 264 and glycine 307. 4 residues coordinate ATP: threonine 264, glycine 307, glutamine 311, and glycine 408. An ADP-binding site is contributed by glycine 408.

This sequence belongs to the FGGY kinase family.

It catalyses the reaction glycerol + ATP = sn-glycerol 3-phosphate + ADP + H(+). The protein operates within polyol metabolism; glycerol degradation via glycerol kinase pathway; sn-glycerol 3-phosphate from glycerol: step 1/1. Key enzyme in the regulation of glycerol uptake and metabolism. Catalyzes the phosphorylation of glycerol to yield sn-glycerol 3-phosphate. The protein is Glycerol kinase of Saccharolobus islandicus (strain L.S.2.15 / Lassen #1) (Sulfolobus islandicus).